The following is a 232-amino-acid chain: Large ribosomal subunit protein uL1 (232 aa).

This sequence belongs to the universal ribosomal protein uL1 family. In terms of assembly, part of the 50S ribosomal subunit.

In terms of biological role, binds directly to 23S rRNA. The L1 stalk is quite mobile in the ribosome, and is involved in E site tRNA release. Functionally, protein L1 is also a translational repressor protein, it controls the translation of the L11 operon by binding to its mRNA. The sequence is that of Large ribosomal subunit protein uL1 from Parabacteroides distasonis (strain ATCC 8503 / DSM 20701 / CIP 104284 / JCM 5825 / NCTC 11152).